The sequence spans 742 residues: Phosphoribosylformylglycinamidine synthase subunit PurL (742 aa).

Histidine 54 is an active-site residue. Tyrosine 57 and lysine 96 together coordinate ATP. Mg(2+) is bound at residue glutamate 98. Residues 99–102 and arginine 121 contribute to the substrate site; that span reads SHNH. The active-site Proton acceptor is the histidine 100. Aspartate 122 provides a ligand contact to Mg(2+). Glutamine 245 contributes to the substrate binding site. Residue aspartate 273 coordinates Mg(2+). 317 to 319 contributes to the substrate binding site; it reads ESQ. ATP contacts are provided by aspartate 500 and glycine 537. Asparagine 538 lines the Mg(2+) pocket. Residue serine 540 participates in substrate binding.

The protein belongs to the FGAMS family. In terms of assembly, monomer. Part of the FGAM synthase complex composed of 1 PurL, 1 PurQ and 2 PurS subunits.

The protein localises to the cytoplasm. The catalysed reaction is N(2)-formyl-N(1)-(5-phospho-beta-D-ribosyl)glycinamide + L-glutamine + ATP + H2O = 2-formamido-N(1)-(5-O-phospho-beta-D-ribosyl)acetamidine + L-glutamate + ADP + phosphate + H(+). Its pathway is purine metabolism; IMP biosynthesis via de novo pathway; 5-amino-1-(5-phospho-D-ribosyl)imidazole from N(2)-formyl-N(1)-(5-phospho-D-ribosyl)glycinamide: step 1/2. Part of the phosphoribosylformylglycinamidine synthase complex involved in the purines biosynthetic pathway. Catalyzes the ATP-dependent conversion of formylglycinamide ribonucleotide (FGAR) and glutamine to yield formylglycinamidine ribonucleotide (FGAM) and glutamate. The FGAM synthase complex is composed of three subunits. PurQ produces an ammonia molecule by converting glutamine to glutamate. PurL transfers the ammonia molecule to FGAR to form FGAM in an ATP-dependent manner. PurS interacts with PurQ and PurL and is thought to assist in the transfer of the ammonia molecule from PurQ to PurL. This chain is Phosphoribosylformylglycinamidine synthase subunit PurL, found in Oceanobacillus iheyensis (strain DSM 14371 / CIP 107618 / JCM 11309 / KCTC 3954 / HTE831).